The sequence spans 350 residues: Uroporphyrinogen decarboxylase (350 aa).

Residues 28–32 (RQAGR), D78, Y155, S210, and H325 contribute to the substrate site.

It belongs to the uroporphyrinogen decarboxylase family. As to quaternary structure, homodimer.

The protein localises to the cytoplasm. The catalysed reaction is uroporphyrinogen III + 4 H(+) = coproporphyrinogen III + 4 CO2. It functions in the pathway porphyrin-containing compound metabolism; protoporphyrin-IX biosynthesis; coproporphyrinogen-III from 5-aminolevulinate: step 4/4. Functionally, catalyzes the decarboxylation of four acetate groups of uroporphyrinogen-III to yield coproporphyrinogen-III. This Microcystis aeruginosa (strain NIES-843 / IAM M-2473) protein is Uroporphyrinogen decarboxylase.